A 224-amino-acid polypeptide reads, in one-letter code: MARYLVLAVALLLAACSSTQKKPLADDPFYAPVYPEAPPTKIAATGSIYQDSQASSLYSDIRAHKVGDIITIVLKESTQAKKSAGNQIKKGSDMSLDPIFAGGSNISVGGVPIDLRYKDSMNTKRESDADQSNSLDGSISANVMQVLNNGSLVIRGEKWISINNGDEFIRVTGLVRSQDIKPDNTIDSTRMANARIQYSGTGTFADAQKVGWLSQFFMSDWWPF.

The signal sequence occupies residues 1–15 (MARYLVLAVALLLAA). Cys-16 carries N-palmitoyl cysteine lipidation. A lipid anchor (S-diacylglycerol cysteine) is attached at Cys-16.

Belongs to the FlgH family. As to quaternary structure, the basal body constitutes a major portion of the flagellar organelle and consists of four rings (L,P,S, and M) mounted on a central rod.

Its subcellular location is the cell outer membrane. It localises to the bacterial flagellum basal body. Functionally, assembles around the rod to form the L-ring and probably protects the motor/basal body from shearing forces during rotation. This is Flagellar L-ring protein from Shewanella baltica (strain OS185).